We begin with the raw amino-acid sequence, 341 residues long: tRNA N6-adenosine threonylcarbamoyltransferase (341 aa).

H112 and H116 together coordinate Fe cation. Residues 138–142, D171, G184, D188, and N279 each bind substrate; that span reads TVSGG. D307 contacts Fe cation.

Belongs to the KAE1 / TsaD family. Fe(2+) is required as a cofactor.

Its subcellular location is the cytoplasm. The enzyme catalyses L-threonylcarbamoyladenylate + adenosine(37) in tRNA = N(6)-L-threonylcarbamoyladenosine(37) in tRNA + AMP + H(+). Functionally, required for the formation of a threonylcarbamoyl group on adenosine at position 37 (t(6)A37) in tRNAs that read codons beginning with adenine. Is involved in the transfer of the threonylcarbamoyl moiety of threonylcarbamoyl-AMP (TC-AMP) to the N6 group of A37, together with TsaE and TsaB. TsaD likely plays a direct catalytic role in this reaction. This Riemerella anatipestifer (Moraxella anatipestifer) protein is tRNA N6-adenosine threonylcarbamoyltransferase.